A 533-amino-acid chain; its full sequence is MVHLAKYIVVTGGVVSSIGKGITAASIGRILRSYGLSVTAIKIDPYLNWDSGTLNPYQHGEVFVTDDGMETDLDLGHYERFLDSDLPGEANITTGKVYMSVINKERSGDYLGSCVQIIPHITDEIKSMIRKIADKSGAEVVLVEVGGTVGDIEGQPFLEALRQLRNEEGHENVMFVHVTYVPYLRAAGEFKTKPTQHSTKELRSTGINPDMIICRSEMPIDSSLKRKIAHFCDVEEEAVVNAPDASSIYEVPLVLDSERVGDYIVRRIELDVDGEADLSEWAGIVESLMIDEPVVTVGIVGKYVELEDSYISIREALKHAAAHLRVRVDIEWISADDAVNEEDLSRLDSILIPGGFGERGIAGKLEAVRFALENRVPIFGICLGMQCMVIEFARLNGMEGANSTEFDPETPYPVIDMMEEQKRIKNMGGTMRLGSYQCRIREGTLAHEAYGTELVGERHRHRFELNNEFREELESKGLIISGTSPDDFLVEMVEIKDHPWFLGCQFHPEFRSRPNRAHPLFVSFLRAALERSR.

The amidoligase domain stretch occupies residues 1–270 (MVHLAKYIVV…GDYIVRRIEL (270 aa)). Ser16 is a binding site for CTP. Ser16 contacts UTP. 17 to 22 (SIGKGI) is a binding site for ATP. Tyr57 contributes to the L-glutamine binding site. Asp74 contacts ATP. Positions 74 and 144 each coordinate Mg(2+). CTP is bound by residues 151 to 153 (DIE), 191 to 196 (KTKPTQ), and Lys227. UTP is bound by residues 191–196 (KTKPTQ) and Lys227. The Glutamine amidotransferase type-1 domain maps to 303 to 533 (YVELEDSYIS…FLRAALERSR (231 aa)). Gly355 contributes to the L-glutamine binding site. Residue Cys382 is the Nucleophile; for glutamine hydrolysis of the active site. Residues 383–386 (LGMQ), Glu405, and Arg462 each bind L-glutamine. Active-site residues include His507 and Glu509.

This sequence belongs to the CTP synthase family. As to quaternary structure, homotetramer.

It catalyses the reaction UTP + L-glutamine + ATP + H2O = CTP + L-glutamate + ADP + phosphate + 2 H(+). It carries out the reaction L-glutamine + H2O = L-glutamate + NH4(+). The catalysed reaction is UTP + NH4(+) + ATP = CTP + ADP + phosphate + 2 H(+). It functions in the pathway pyrimidine metabolism; CTP biosynthesis via de novo pathway; CTP from UDP: step 2/2. Its activity is regulated as follows. Allosterically activated by GTP, when glutamine is the substrate; GTP has no effect on the reaction when ammonia is the substrate. The allosteric effector GTP functions by stabilizing the protein conformation that binds the tetrahedral intermediate(s) formed during glutamine hydrolysis. Inhibited by the product CTP, via allosteric rather than competitive inhibition. Catalyzes the ATP-dependent amination of UTP to CTP with either L-glutamine or ammonia as the source of nitrogen. Regulates intracellular CTP levels through interactions with the four ribonucleotide triphosphates. This is CTP synthase from Methanothermobacter thermautotrophicus (strain ATCC 29096 / DSM 1053 / JCM 10044 / NBRC 100330 / Delta H) (Methanobacterium thermoautotrophicum).